An 81-amino-acid chain; its full sequence is Photosystem I iron-sulfur center (81 aa).

4Fe-4S ferredoxin-type domains follow at residues 2 to 31 (AHSV…MVPR) and 39 to 68 (IASA…VRVY). Cys-11, Cys-14, Cys-17, Cys-21, Cys-48, Cys-51, Cys-54, and Cys-58 together coordinate [4Fe-4S] cluster.

The eukaryotic PSI reaction center is composed of at least 11 subunits. Requires [4Fe-4S] cluster as cofactor.

The protein localises to the plastid. It is found in the chloroplast thylakoid membrane. The catalysed reaction is reduced [plastocyanin] + hnu + oxidized [2Fe-2S]-[ferredoxin] = oxidized [plastocyanin] + reduced [2Fe-2S]-[ferredoxin]. Apoprotein for the two 4Fe-4S centers FA and FB of photosystem I (PSI); essential for photochemical activity. FB is the terminal electron acceptor of PSI, donating electrons to ferredoxin. The C-terminus interacts with PsaA/B/D and helps assemble the protein into the PSI complex. Required for binding of PsaD and PsaE to PSI. PSI is a plastocyanin/cytochrome c6-ferredoxin oxidoreductase, converting photonic excitation into a charge separation, which transfers an electron from the donor P700 chlorophyll pair to the spectroscopically characterized acceptors A0, A1, FX, FA and FB in turn. The sequence is that of Photosystem I iron-sulfur center from Antithamnion sp. (Red alga).